We begin with the raw amino-acid sequence, 156 residues long: Cyclin-dependent protein kinase inhibitor SMR10 (156 aa).

Residues 52–90 are disordered; it reads QDQDLEPKSQETNNCSRKEGATVKKEEEEEDDYCKTPTR. The segment covering 67 to 77 has biased composition (basic and acidic residues); that stretch reads SRKEGATVKKE.

In terms of biological role, probable cyclin-dependent protein kinase (CDK) inhibitor that functions as a repressor of mitosis in the endoreduplication cell cycle. The chain is Cyclin-dependent protein kinase inhibitor SMR10 from Arabidopsis thaliana (Mouse-ear cress).